A 130-amino-acid polypeptide reads, in one-letter code: Small ribosomal subunit protein uS8z/uS8w (130 aa).

This sequence belongs to the universal ribosomal protein uS8 family.

It localises to the cytoplasm. In Arabidopsis thaliana (Mouse-ear cress), this protein is Small ribosomal subunit protein uS8z/uS8w (RPS15AA).